A 323-amino-acid chain; its full sequence is Ankyrin repeat and SOCS box protein 11 (323 aa).

6 ANK repeats span residues 64–93 (ADRSPLHEAAAQGRLLALKTLIAQGVNVNL), 97–126 (NRVSSLHEACLGGHVACAKALLENGAHVNG), 130–159 (HGATPLFNACCSGSAACVNVLLEFGAKAQF), 162–191 (HLASPIHEAVKRGHRECMEILLANNVNIDH), 195–224 (QLGTPLYVACTYQRVDCVKKLLELGASVDH), and 227–256 (WLDTPLHAAARQSNVEVIHLLTDYGANLKR). The 50-residue stretch at 274-323 (VEQALLLCEGPPALSQLCRLCVRKCLGRACHQAIHKLHLPEPLERFLLYQ) folds into the SOCS box domain.

It belongs to the ankyrin SOCS box (ASB) family. Substrate-recognition component of the ECS(ASB11) complex, composed of ASB11, CUL5, ELOB, ELOC and RNF7/RBX2.

It localises to the endoplasmic reticulum. The protein operates within protein modification; protein ubiquitination. Its function is as follows. Substrate-recognition component of a cullin-5-RING E3 ubiquitin-protein ligase complex (ECS complex, also named CRL5 complex), which mediates the ubiquitination and subsequent proteasomal degradation of target proteins, such as BIK, DIRAS2 and RPN1. The ECS(ASB11) complex acts as a regulator of the endoplasmic reticulum unfolded protein response by mediating ubiquitination and degradation of BIK. This Pongo abelii (Sumatran orangutan) protein is Ankyrin repeat and SOCS box protein 11 (ASB11).